A 683-amino-acid polypeptide reads, in one-letter code: MAALQALPLSIDQNAEVSGSQSHTNTRSPVTENTMGSVSSLISGRTYHDKQCKASELSNKCRKPTNMPNCFKQQEGLIKSNYSSQDPLFNGLPTKKPSTTTSGNNGNYVYVNEDFKEEWHEPRVPISPSSDAEDIREERALNGNIRGPPPKLIPVSGKLEKNVEKTLIKPTAFKPVVPKKRNSSLQYLVQRNGGPGLSESQSSLNLLFNGNAAGIPEKHNLLSCRNSTHSGTMSDSGRTSLSSLPTYSTNCSHQMDPVSVSMGHINLDNHTNINGYSDRAPRGRTRPTNSDSGRSSSSKSTGSLSGRGNPSSDSGSCDRSPILSDEILIRELEEKLKDREMELQQLKENLDENEAAICQVYEEKQKRCEQEMEELRQSCALKMKQAAQKAQRLQQVLQLQIFQLQQEKKKLQEDFSQLLQERELLEKRCASFEREQTEFGPRLEETKWEVCQKSGEISLLKQQLKDSQAELAQKSNEILLLRAQVREARSDLQISEEQVQELQDTAHTKTLELEVCENELQRKKNEAELLREKASKLDQEVAGLREAAVANLRHGLCLCHEKEDPFLLYESDEAKAQRQNADNLQGLQQYVERLREALTSERRRYQEQADSFEDERRIWQEEKEKVIRYQKQLQHNYIQMYQQNRELERDIKQLSLELEARELDEFDLHGAEIQFEEITATEI.

Disordered stretches follow at residues 1–37, 82–107, and 262–320; these read MAALQALPLSIDQNAEVSGSQSHTNTRSPVTENTMGS, YSSQDPLFNGLPTKKPSTTTSGNNGN, and MGHI…CDRS. Composition is skewed to polar residues over residues 11–37 and 96–107; these read IDQNAEVSGSQSHTNTRSPVTENTMGS and KPSTTTSGNNGN. Residues 290 to 308 show a composition bias toward low complexity; sequence SDSGRSSSSKSTGSLSGRG. Positions 324 to 665 form a coiled coil; it reads SDEILIRELE…LELEARELDE (342 aa).

This sequence belongs to the LZTS2 family.

The protein resides in the cytoplasm. The protein localises to the cytoskeleton. It localises to the microtubule organizing center. It is found in the centrosome. In terms of biological role, negative regulator of katanin-mediated microtubule severing and release from the centrosome. Required for central spindle formation and the completion of cytokinesis. Negative regulator of the Wnt signaling pathway. Represses beta-catenin-mediated transcriptional activation by promoting the nuclear exclusion of beta-catenin. The polypeptide is Leucine zipper putative tumor suppressor 2 homolog (lzts2) (Xenopus tropicalis (Western clawed frog)).